We begin with the raw amino-acid sequence, 277 residues long: Pantothenate synthetase (277 aa).

ATP is bound at residue 26–33; it reads MGYLHQGH. The active-site Proton donor is His-33. Gln-57 is a binding site for (R)-pantoate. Gln-57 provides a ligand contact to beta-alanine. 143-146 is an ATP binding site; that stretch reads GQKD. A (R)-pantoate-binding site is contributed by Gln-149. Residues Val-172 and 180 to 183 contribute to the ATP site; that span reads LSSR.

It belongs to the pantothenate synthetase family. In terms of assembly, homodimer.

It is found in the cytoplasm. It catalyses the reaction (R)-pantoate + beta-alanine + ATP = (R)-pantothenate + AMP + diphosphate + H(+). It participates in cofactor biosynthesis; (R)-pantothenate biosynthesis; (R)-pantothenate from (R)-pantoate and beta-alanine: step 1/1. Functionally, catalyzes the condensation of pantoate with beta-alanine in an ATP-dependent reaction via a pantoyl-adenylate intermediate. The chain is Pantothenate synthetase from Chloroflexus aggregans (strain MD-66 / DSM 9485).